Reading from the N-terminus, the 130-residue chain is MRHRKSGRQLNRSSTHLNSMLKNMACSLFTHEVIKTTLSKAKELRRIVEPIITLSKIDTVSHRRLVFSRIRDNAIVAKLFKKLGPCFFSRLGGYTRILKCGFRSGDKAPMAYIELVDRVKNNKKNEILKK.

It belongs to the bacterial ribosomal protein bL17 family. In terms of assembly, part of the 50S ribosomal subunit. Contacts protein L32.

In Buchnera aphidicola subsp. Acyrthosiphon pisum (strain 5A), this protein is Large ribosomal subunit protein bL17.